Reading from the N-terminus, the 514-residue chain is Maturase K (514 aa).

It belongs to the intron maturase 2 family. MatK subfamily.

Its subcellular location is the plastid. The protein localises to the chloroplast. Functionally, usually encoded in the trnK tRNA gene intron. Probably assists in splicing its own and other chloroplast group II introns. The polypeptide is Maturase K (Erythronium grandiflorum (Yellow avalanche-lily)).